A 188-amino-acid polypeptide reads, in one-letter code: Large ribosomal subunit protein eL18 (188 aa).

The tract at residues 151–188 (HFGPAPGVPHSHTKPLVRSKGRKFERARGRRKSCGYKK) is disordered. 2 stretches are compositionally biased toward basic residues: residues 161–171 (SHTKPLVRSKG) and 178–188 (RGRRKSCGYKK).

The protein belongs to the eukaryotic ribosomal protein eL18 family.

It localises to the cytoplasm. This is Large ribosomal subunit protein eL18 (RpL18) from Lysiphlebus testaceipes (Greenbugs aphid parastoid).